A 494-amino-acid chain; its full sequence is Splicing regulatory glutamine/lysine-rich protein 1 (494 aa).

The RRM domain occupies 69 to 145 (RTVYVGNLNS…RPLKINHSNN (77 aa)). Residues Ser174 and Ser187 each carry the phosphoserine modification. The interval 176 to 494 (ISAAIEPESG…ERLCSTADAV (319 aa)) is disordered. Basic and acidic residues predominate over residues 183-192 (ESGKSNERKG). 2 stretches are compositionally biased toward basic residues: residues 193–230 (GRSRSHTRSKSRSSSKSHSRRKRSQSKHRSRSHNRSRS) and 238–262 (SKSPHKKRSKSRERRKSRSRSRSRD). A compositionally biased stretch (basic and acidic residues) spans 263 to 340 (KRKDTREKVK…DRSKEADEKR (78 aa)). Thr348 bears the Phosphothreonine mark. Over residues 357–373 (RRSRSASRERRRRRSRS) the composition is skewed to basic residues. Composition is skewed to basic and acidic residues over residues 404–453 (REKE…KEAD) and 463–474 (KDTARTEEESKA).

Belongs to the splicing factor SR family. As to quaternary structure, interacts with SREK1IP1. Homodimer. Binds SFRS1, SFRS2, SFRS3 and SFRS6. Interacts with the spliceosome. In terms of tissue distribution, ubiquitous. Detected in liver, brain, lung, spleen, testis and pancreas.

The protein localises to the nucleus. Its function is as follows. Participates in the regulation of alternative splicing by modulating the activity of other splice facors. Inhibits the splicing activity of SFRS1, SFRS2 and SFRS6. Augments the splicing activity of SFRS3. This chain is Splicing regulatory glutamine/lysine-rich protein 1 (Srek1), found in Rattus norvegicus (Rat).